An 81-amino-acid polypeptide reads, in one-letter code: MGGNGIRALVGVIASLGLIVFLLVGILANSAPSVPSSENVKTLRFSGKDVNLFHVSKRKVPNGPDPIHNRKAETSRRPPRV.

Residues 1 to 30 (MGGNGIRALVGVIASLGLIVFLLVGILANS) form the signal peptide. Positions 57-81 (KRKVPNGPDPIHNRKAETSRRPPRV) are disordered. 2 positions are modified to hydroxyproline: Pro61 and Pro64. O-linked (Ara...) hydroxyproline glycosylation is present at Pro64. Residues 67-81 (IHNRKAETSRRPPRV) are compositionally biased toward basic and acidic residues.

It belongs to the CLV3/ESR signal peptide family. The O-glycosylation (arabinosylation) of the hydroxyproline Pro-64 enhances binding affinity of the CLE25p peptide for its receptor. As to expression, mostly expressed in flowers and siliques, and, to a lower extent, in roots, stems, apex, seedlings, leaves and pollen.

The protein localises to the secreted. It is found in the extracellular space. Functionally, extracellular signal peptide that regulates cell fate. Represses root apical meristem maintenance. Regulates the transition of protophloem cells from proliferation to differentiation, thus impinging on postembryonic growth capacity of the root meristem; this signaling pathway requires CRN and CLV2. The protein is CLAVATA3/ESR (CLE)-related protein 25 of Arabidopsis thaliana (Mouse-ear cress).